We begin with the raw amino-acid sequence, 379 residues long: 1-deoxy-D-xylulose 5-phosphate reductoisomerase (379 aa).

Residues threonine 10, glycine 11, serine 12, isoleucine 13, arginine 38, asparagine 39, and asparagine 121 each contribute to the NADPH site. Lysine 122 contacts 1-deoxy-D-xylulose 5-phosphate. Glutamate 123 is an NADPH binding site. Aspartate 147 contacts Mn(2+). Residues serine 148, glutamate 149, serine 173, and histidine 196 each coordinate 1-deoxy-D-xylulose 5-phosphate. A Mn(2+)-binding site is contributed by glutamate 149. NADPH is bound at residue glycine 202. Residues serine 209, asparagine 214, lysine 215, and glutamate 218 each coordinate 1-deoxy-D-xylulose 5-phosphate. Residue glutamate 218 coordinates Mn(2+).

This sequence belongs to the DXR family. Mg(2+) is required as a cofactor. It depends on Mn(2+) as a cofactor.

It catalyses the reaction 2-C-methyl-D-erythritol 4-phosphate + NADP(+) = 1-deoxy-D-xylulose 5-phosphate + NADPH + H(+). The protein operates within isoprenoid biosynthesis; isopentenyl diphosphate biosynthesis via DXP pathway; isopentenyl diphosphate from 1-deoxy-D-xylulose 5-phosphate: step 1/6. Catalyzes the NADPH-dependent rearrangement and reduction of 1-deoxy-D-xylulose-5-phosphate (DXP) to 2-C-methyl-D-erythritol 4-phosphate (MEP). The protein is 1-deoxy-D-xylulose 5-phosphate reductoisomerase of Chlamydia trachomatis serovar L2 (strain ATCC VR-902B / DSM 19102 / 434/Bu).